We begin with the raw amino-acid sequence, 207 residues long: ATP synthase subunit b 2 (207 aa).

The chain crosses the membrane as a helical span at residues 58-78; sequence LLWLVITFGVFYLLMQKVIAP.

It belongs to the ATPase B chain family. In terms of assembly, F-type ATPases have 2 components, F(1) - the catalytic core - and F(0) - the membrane proton channel. F(1) has five subunits: alpha(3), beta(3), gamma(1), delta(1), epsilon(1). F(0) has three main subunits: a(1), b(2) and c(10-14). The alpha and beta chains form an alternating ring which encloses part of the gamma chain. F(1) is attached to F(0) by a central stalk formed by the gamma and epsilon chains, while a peripheral stalk is formed by the delta and b chains.

It localises to the cell inner membrane. Its function is as follows. F(1)F(0) ATP synthase produces ATP from ADP in the presence of a proton or sodium gradient. F-type ATPases consist of two structural domains, F(1) containing the extramembraneous catalytic core and F(0) containing the membrane proton channel, linked together by a central stalk and a peripheral stalk. During catalysis, ATP synthesis in the catalytic domain of F(1) is coupled via a rotary mechanism of the central stalk subunits to proton translocation. Functionally, component of the F(0) channel, it forms part of the peripheral stalk, linking F(1) to F(0). The b'-subunit is a diverged and duplicated form of b found in plants and photosynthetic bacteria. The chain is ATP synthase subunit b 2 (atpF2) from Rhizobium johnstonii (strain DSM 114642 / LMG 32736 / 3841) (Rhizobium leguminosarum bv. viciae).